We begin with the raw amino-acid sequence, 212 residues long: Bcl-2-related ovarian killer protein (212 aa).

Ser7 is modified (phosphoserine). Residues 15 to 45 are interactions with ITPR1; sequence MDAFDRSPTDKELVAQAKALGREYVHARLLR. Residues Lys25 and Lys32 each participate in a glycyl lysine isopeptide (Lys-Gly) (interchain with G-Cter in ubiquitin) cross-link. The BH4 motif lies at 32–44; that stretch reads KALGREYVHARLL. The BH3 motif lies at 66–82; sequence VCAVLLRLGDELEMIRP. The interval 70–78 is nuclear export signal; it reads LLRLGDELE. Residues 112–131 carry the BH1 motif; the sequence is HIFSAGITWGKVVSLYAVAA. Glycyl lysine isopeptide (Lys-Gly) (interchain with G-Cter in ubiquitin) cross-links involve residues Lys159 and Lys176. A BH2 motif is present at residues 164 to 178; the sequence is WLRRRGGWTDVLKCV. Residues 189–209 form a helical membrane-spanning segment; the sequence is WLVAALCSFGRFLKAAFFVLL.

This sequence belongs to the Bcl-2 family. Monomer; positively regulates apoptotic process. Homodimer. Heterodimer. Oligomer; promoted by apoptotic stimuli and BH3-only proteins; mediates constitutive activation. Interacts (via BH4 domain) with ITPR1; enhances BOK expression and stabilization; limits apoptosis and prevents ubiquitination and then degradation; protects ITPR1 from proteolysis by CASP3 during apoptosis. Interacts with ITPR2 and ITPR3; binds most strongly to ITPR2, and barely to ITPR3; regulates their expression. Interacts with XPO1; translocates to the cytoplasm. Interacts with BNIP3; promotes oligomerization. Post-translationally, ubiquitinated by AMFR/gp78 E3 ubiquitin ligase complex; mediates degradation by ubiquitin-proteasome pathway in a VCP/p97-dependent manner; prevents from pro-apoptotic activity; promotes degradation of newly synthesized proteins that are not ITPR1 associated. Expressed mainly in oocytes; weak expression in granulosa cells of the developing follicles. In adult human ovaries, expressed in granulosa cells at all follicular stages, but expression in primordial/primary follicles granulosa cell is stronger than in secondary and antral follicles.

It localises to the mitochondrion membrane. The protein localises to the endoplasmic reticulum membrane. The protein resides in the mitochondrion inner membrane. It is found in the cytoplasm. Its subcellular location is the nucleus. It localises to the mitochondrion. The protein localises to the endoplasmic reticulum. The protein resides in the mitochondrion outer membrane. It is found in the early endosome membrane. Its subcellular location is the recycling endosome membrane. It localises to the nucleus outer membrane. The protein localises to the golgi apparatus. The protein resides in the cis-Golgi network membrane. It is found in the trans-Golgi network membrane. Its subcellular location is the membrane. Its function is as follows. Apoptosis regulator that functions through different apoptotic signaling pathways. Plays a roles as pro-apoptotic protein that positively regulates intrinsic apoptotic process in a BAX- and BAK1-dependent manner or in a BAX- and BAK1-independent manner. In response to endoplasmic reticulum stress promotes mitochondrial apoptosis through downstream BAX/BAK1 activation and positive regulation of PERK-mediated unfolded protein response. Activates apoptosis independently of heterodimerization with survival-promoting BCL2 and BCL2L1 through induction of mitochondrial outer membrane permeabilization, in a BAX- and BAK1-independent manner, in response to inhibition of ERAD-proteasome degradation system, resulting in cytochrome c release. In response to DNA damage, mediates intrinsic apoptotic process in a TP53-dependent manner. Plays a role in granulosa cell apoptosis by CASP3 activation. Plays a roles as anti-apoptotic protein during neuronal apoptotic process, by negatively regulating poly ADP-ribose polymerase-dependent cell death through regulation of neuronal calcium homeostasis and mitochondrial bioenergetics in response to NMDA excitation. In addition to its role in apoptosis, may regulate trophoblast cell proliferation during the early stages of placental development, by acting on G1/S transition through regulation of CCNE1 expression. May also play a role as an inducer of autophagy by disrupting interaction between MCL1 and BECN1. In terms of biological role, pro-apoptotic molecule exerting its function through the mitochondrial pathway. This chain is Bcl-2-related ovarian killer protein, found in Homo sapiens (Human).